We begin with the raw amino-acid sequence, 181 residues long: Cytochrome c-type biogenesis protein CcmE (181 aa).

Residues 1-8 are Cytoplasmic-facing; the sequence is MNPRRKSR. Residues 9–29 traverse the membrane as a helical; Signal-anchor for type II membrane protein segment; the sequence is LKVVVLIMFSVAVAAGLTLYA. Residues 30–181 lie on the Periplasmic side of the membrane; it reads LSQNIDLFYT…TFNTLQGESK (152 aa). The heme site is built by histidine 131 and tyrosine 135.

The protein belongs to the CcmE/CycJ family.

The protein resides in the cell inner membrane. Its function is as follows. Heme chaperone required for the biogenesis of c-type cytochromes. Transiently binds heme delivered by CcmC and transfers the heme to apo-cytochromes in a process facilitated by CcmF and CcmH. This chain is Cytochrome c-type biogenesis protein CcmE, found in Haemophilus ducreyi (strain 35000HP / ATCC 700724).